A 717-amino-acid chain; its full sequence is Pentatricopeptide repeat-containing protein At1g53600, mitochondrial (717 aa).

Residues 1 to 47 (MVMRPISNKGLIYRHNICLRCNSTLAVSNHEPITQKTRNFLETTTTS) constitute a mitochondrion transit peptide. PPR repeat units follow at residues 49-79 (AIFQ…MSNR), 80-110 (SIVS…MPVR), 111-142 (VTTS…IPEK), 143-173 (NAVS…TPVK), 176-206 (DSVA…MAVK), 207-241 (EVVS…NVIT), 242-272 (WTAM…GDVK), 274-308 (NSNT…PLEF), 309-339 (DLFL…MKNK), 340-374 (DSVS…DMVS), 375-401 (WTDM…MPEK), 402-436 (DNIT…EVCP), 437-471 (NSYT…NIVN), 472-502 (DLSV…ISEP), 503-537 (NIVS…GKEP), 538-568 (NGVT…MKSS), and 574-604 (GPDH…MPCK). Residues 609–684 (VWGSLLSASK…DPGSSWIILK (76 aa)) are type E motif. Positions 685–715 (GEVHNFLAGDESQLNLEEIGFTLKMIRKEME) are type E(+) motif.

Belongs to the PPR family. PCMP-E subfamily.

It is found in the mitochondrion. This chain is Pentatricopeptide repeat-containing protein At1g53600, mitochondrial (PCMP-E63), found in Arabidopsis thaliana (Mouse-ear cress).